Here is a 347-residue protein sequence, read N- to C-terminus: G-protein coupled receptor homolog U12 (347 aa).

6 helical membrane-spanning segments follow: residues 36–56 (GITL…MILY), 67–87 (FYVI…FFMT), 103–124 (LVYF…IIAT), 147–167 (IGIL…FVKT), 194–214 (IVFS…FYVI), and 236–256 (ILLL…ICEI). The cysteines at positions 101 and 176 are disulfide-linked. The interval 321 to 347 (QKRKDSDASEHDQNSKSKASVEKNQPL) is disordered. The span at 322-341 (KRKDSDASEHDQNSKSKASV) shows a compositional bias: basic and acidic residues.

The protein belongs to the G-protein coupled receptor 1 family.

The protein resides in the membrane. Its function is as follows. Probable G-protein coupled receptor. This is G-protein coupled receptor homolog U12 (U12) from Homo sapiens (Human).